The following is a 261-amino-acid chain: Cytochrome c oxidase subunit 3 (261 aa).

Residues 1–15 are Mitochondrial matrix-facing; the sequence is MAHQAHPYHMVDPSP. A helical membrane pass occupies residues 16-34; the sequence is WPLTGATAALLMTSGLAIW. The Mitochondrial intermembrane portion of the chain corresponds to 35 to 40; that stretch reads FHFHSL. A helical transmembrane segment spans residues 41 to 66; it reads LLLYLGLTLLLLTMIQWWRDIIREGT. At 67–72 the chain is on the mitochondrial matrix side; the sequence is FQGHHT. The chain crosses the membrane as a helical span at residues 73–105; it reads PPVQKGLRYGMILFIVSEVFFFLGFFWAFYHSS. Over 106–128 the chain is Mitochondrial intermembrane; it reads LAPTPELGGCWPPTGINPLDPFE. A helical transmembrane segment spans residues 129–152; that stretch reads VPLLNTAVLLASGVTVTWAHHGLM. Residues 153–155 are Mitochondrial matrix-facing; the sequence is EGN. A helical transmembrane segment spans residues 156 to 183; it reads RKEAIQALTLTIILGVYFTALQAMEYYE. Topologically, residues 184-190 are mitochondrial intermembrane; it reads APFTIAD. Residues 191–223 traverse the membrane as a helical segment; sequence GVYGTTFFVATGFHGLHVIIGSTFLAVCLLRQV. The Mitochondrial matrix segment spans residues 224-232; it reads LYHFTSEHH. The helical transmembrane segment at 233–256 threads the bilayer; that stretch reads FGFEAAAWYWHFVDVVWLFLYVSI. Residues 257–261 are Mitochondrial intermembrane-facing; that stretch reads YWWGS.

The protein belongs to the cytochrome c oxidase subunit 3 family. As to quaternary structure, component of the cytochrome c oxidase (complex IV, CIV), a multisubunit enzyme composed of 14 subunits. The complex is composed of a catalytic core of 3 subunits MT-CO1, MT-CO2 and MT-CO3, encoded in the mitochondrial DNA, and 11 supernumerary subunits COX4I, COX5A, COX5B, COX6A, COX6B, COX6C, COX7A, COX7B, COX7C, COX8 and NDUFA4, which are encoded in the nuclear genome. The complex exists as a monomer or a dimer and forms supercomplexes (SCs) in the inner mitochondrial membrane with NADH-ubiquinone oxidoreductase (complex I, CI) and ubiquinol-cytochrome c oxidoreductase (cytochrome b-c1 complex, complex III, CIII), resulting in different assemblies (supercomplex SCI(1)III(2)IV(1) and megacomplex MCI(2)III(2)IV(2)).

The protein localises to the mitochondrion inner membrane. It catalyses the reaction 4 Fe(II)-[cytochrome c] + O2 + 8 H(+)(in) = 4 Fe(III)-[cytochrome c] + 2 H2O + 4 H(+)(out). In terms of biological role, component of the cytochrome c oxidase, the last enzyme in the mitochondrial electron transport chain which drives oxidative phosphorylation. The respiratory chain contains 3 multisubunit complexes succinate dehydrogenase (complex II, CII), ubiquinol-cytochrome c oxidoreductase (cytochrome b-c1 complex, complex III, CIII) and cytochrome c oxidase (complex IV, CIV), that cooperate to transfer electrons derived from NADH and succinate to molecular oxygen, creating an electrochemical gradient over the inner membrane that drives transmembrane transport and the ATP synthase. Cytochrome c oxidase is the component of the respiratory chain that catalyzes the reduction of oxygen to water. Electrons originating from reduced cytochrome c in the intermembrane space (IMS) are transferred via the dinuclear copper A center (CU(A)) of subunit 2 and heme A of subunit 1 to the active site in subunit 1, a binuclear center (BNC) formed by heme A3 and copper B (CU(B)). The BNC reduces molecular oxygen to 2 water molecules using 4 electrons from cytochrome c in the IMS and 4 protons from the mitochondrial matrix. The protein is Cytochrome c oxidase subunit 3 (MT-CO3) of Scyliorhinus canicula (Small-spotted catshark).